We begin with the raw amino-acid sequence, 94 residues long: Translation initiation factor 1A 2 (94 aa).

Positions 6 to 80 (GRRNLRMPND…EKANVEWRYS (75 aa)) constitute an S1-like domain.

It belongs to the eIF-1A family.

Seems to be required for maximal rate of protein biosynthesis. Enhances ribosome dissociation into subunits and stabilizes the binding of the initiator Met-tRNA(I) to 40 S ribosomal subunits. The sequence is that of Translation initiation factor 1A 2 (eIF1A2) from Halobacterium salinarum (strain ATCC 700922 / JCM 11081 / NRC-1) (Halobacterium halobium).